The following is a 265-amino-acid chain: WUSCHEL-related homeobox 3B (265 aa).

Residues 4-68 constitute a DNA-binding region (homeobox; WUS-type); sequence TPSTRWCPTP…NHKARERQRL (65 aa). 2 disordered regions span residues 77 to 107 and 242 to 265; these read QQQY…APPA and PTKS…TSTN. Residues 254–265 show a composition bias toward low complexity; the sequence is SSKSSSCSTSTN.

The protein belongs to the WUS homeobox family. As to expression, predominantly expressed in tissues enriched for shoot meristems and young lateral organ primordia. First expressed in lateral domains of shoot meristems. It is then expressed in the margins of young lateral organ primordia. Not expressed in roots, seedling leaves or fully expanded coleoptiles. Also expressed in vegetative shoot apices (five leaf primordia and the SAM) and in the male inflorescence. Expressed at high level in the female inflorescence.

Its subcellular location is the nucleus. In terms of biological role, probable transcription factor required to initiate organ founder cells in a lateral domain of shoot meristems. Involved in leaf formation. The chain is WUSCHEL-related homeobox 3B (WOX3B) from Zea mays (Maize).